The chain runs to 389 residues: Acetyl-CoA:oxalate CoA-transferase (389 aa).

The active site involves H237.

In terms of assembly, homodimer.

The enzyme catalyses oxalate + acetyl-CoA = oxalyl-CoA + acetate. In terms of biological role, involved in the catabolism of oxalate and in the adapatation to low pH. ACOCT serves to prime the oxalate-induced acid tolerance response (ATR) cycle by producing substrate for oxalyl-CoA decarboxylase (OXC) and formyl-coenzyme A transferase (FCOCT). Catalyzes the reversible conversion of acetyl-CoA and oxalate to oxalyl-CoA and acetate. It can also use formyl-CoA and oxalate to produce oxalyl-CoA and formate with significantly reduced specific activity. This chain is Acetyl-CoA:oxalate CoA-transferase (uctC), found in Acetobacter aceti.